Consider the following 21-residue polypeptide: 40 kDa major outer membrane protein (21 aa).

In terms of assembly, disulfide bond interactions within and between MOMP molecules and other components form high molecular-weight oligomers.

It is found in the cell outer membrane. In terms of biological role, structural rigidity of the outer membrane of elementary bodies and porin forming, permitting diffusion of solutes through the intracellular reticulate body membrane. The chain is 40 kDa major outer membrane protein from Actinobacillus pleuropneumoniae (Haemophilus pleuropneumoniae).